Consider the following 1264-residue polypeptide: Regulator of G-protein signaling 22 (1264 aa).

A disordered region spans residues 565-587 (EEFSLSQPPKSPNKSPEVKTATQ). Polar residues predominate over residues 568 to 578 (SLSQPPKSPNK). RGS domains lie at 852–980 (KFSD…AARQ) and 1021–1145 (AFRK…TDEN). Positions 1142–1174 (TDENIMSVLERRQEYNKQKKKLAVLEDEKSGKD) form a coiled coil.

In terms of assembly, interacts with GNA11, GNA12 and GNA13. Testis-specific. Expressed in Leydig cells and spermatogenic cells from the spermatogonia to spermatid stages (at protein level).

The protein resides in the cytoplasm. It is found in the nucleus. Inhibits signal transduction by increasing the GTPase activity of G protein alpha subunits thereby driving them into their inactive GDP-bound form. The protein is Regulator of G-protein signaling 22 (RGS22) of Homo sapiens (Human).